Consider the following 513-residue polypeptide: 2-isopropylmalate synthase (513 aa).

The Pyruvate carboxyltransferase domain occupies 5-268 (LIIFDTTLRD…DVGVDTTQIV (264 aa)). Mn(2+) contacts are provided by aspartate 14, histidine 202, histidine 204, and asparagine 239. The interval 394-513 (RFVSLSQRSE…KSSEKLNPQI (120 aa)) is regulatory domain.

This sequence belongs to the alpha-IPM synthase/homocitrate synthase family. LeuA type 1 subfamily. In terms of assembly, homodimer. The cofactor is Mn(2+).

Its subcellular location is the cytoplasm. The enzyme catalyses 3-methyl-2-oxobutanoate + acetyl-CoA + H2O = (2S)-2-isopropylmalate + CoA + H(+). It participates in amino-acid biosynthesis; L-leucine biosynthesis; L-leucine from 3-methyl-2-oxobutanoate: step 1/4. Functionally, catalyzes the condensation of the acetyl group of acetyl-CoA with 3-methyl-2-oxobutanoate (2-ketoisovalerate) to form 3-carboxy-3-hydroxy-4-methylpentanoate (2-isopropylmalate). The protein is 2-isopropylmalate synthase of Ralstonia nicotianae (strain ATCC BAA-1114 / GMI1000) (Ralstonia solanacearum).